The primary structure comprises 539 residues: Phosphoenolpyruvate carboxykinase (ATP) (539 aa).

Substrate-binding residues include R64, Y206, and K212. ATP is bound by residues K212, H231, and 247-255 (GLSGTGKTT). Positions 212 and 231 each coordinate Mn(2+). D268 is a Mn(2+) binding site. ATP contacts are provided by residues E296, R332, 448 to 449 (RI), and T454. Residue R332 coordinates substrate.

Belongs to the phosphoenolpyruvate carboxykinase (ATP) family. Monomer. Mn(2+) serves as cofactor.

The protein resides in the cytoplasm. It catalyses the reaction oxaloacetate + ATP = phosphoenolpyruvate + ADP + CO2. It participates in carbohydrate biosynthesis; gluconeogenesis. Involved in the gluconeogenesis. Catalyzes the conversion of oxaloacetate (OAA) to phosphoenolpyruvate (PEP) through direct phosphoryl transfer between the nucleoside triphosphate and OAA. This chain is Phosphoenolpyruvate carboxykinase (ATP), found in Salmonella agona (strain SL483).